The chain runs to 481 residues: Cobyric acid synthase (481 aa).

Residues 248–435 (NTVIAVPMLP…LHGLFHGGAF (188 aa)) form the GATase cobBQ-type domain. Cys329 (nucleophile) is an active-site residue. His427 is an active-site residue.

It belongs to the CobB/CobQ family. CobQ subfamily.

It functions in the pathway cofactor biosynthesis; adenosylcobalamin biosynthesis. In terms of biological role, catalyzes amidations at positions B, D, E, and G on adenosylcobyrinic A,C-diamide. NH(2) groups are provided by glutamine, and one molecule of ATP is hydrogenolyzed for each amidation. The chain is Cobyric acid synthase from Granulibacter bethesdensis (strain ATCC BAA-1260 / CGDNIH1).